Here is a 516-residue protein sequence, read N- to C-terminus: Cyclic AMP response element-binding protein A (516 aa).

Ser75, Ser79, and Ser82 each carry phosphoserine. Disordered stretches follow at residues 213–237 (KDEP…SQHQ), 294–338 (KSEK…HLFA), and 353–408 (PAGG…KGST). Residues 221 to 237 (SSCPASPTSQASSSQHQ) are compositionally biased toward low complexity. A compositionally biased stretch (low complexity) spans 361-392 (RVSRTAASITRSSSGSASASGSSTSSTVTTTR). One can recognise a bZIP domain in the interval 441-504 (SLKKIRRKIK…ANLLSQLHKL (64 aa)). The basic motif stretch occupies residues 443 to 463 (KKIRRKIKNKISAQESRRKKK). The tract at residues 469-476 (LERRVEIL) is leucine-zipper.

It belongs to the bZIP family. In terms of assembly, may bind DNA as heterodimers with other bZIP proteins. In terms of tissue distribution, in all cell types examined, including developing salivary gland in embryos and in adults, brain and optic lobe cell bodies, salivary gland, midgut epithelial cells of the cardia, female ovarian columnar follicle cells and male seminal vesicle, ejaculatory duct, and ejaculatory bulb.

Its subcellular location is the nucleus. In terms of biological role, transcriptional activator. Binds to fat body-specific enhancers of alcohol dehydrogenase (ADH) and yolk protein genes. BBF-2 may play a role in fat body gene expression. It binds the consensus sequence 5'-T[AC]NACGTAN[TG]C-3'. This is Cyclic AMP response element-binding protein A (CrebA) from Drosophila melanogaster (Fruit fly).